Consider the following 274-residue polypeptide: Type II restriction enzyme HgiBI (274 aa).

Belongs to the TdeIII type II restriction endonuclease family.

The enzyme catalyses Endonucleolytic cleavage of DNA to give specific double-stranded fragments with terminal 5'-phosphates.. In terms of biological role, a P subtype restriction enzyme that recognizes the double-stranded sequence 5'-GGWCC-3' and cleaves after G-1. This system is less active than isoschizomeric RM.HgiEI. This is Type II restriction enzyme HgiBI from Herpetosiphon aurantiacus (Herpetosiphon giganteus).